Here is a 618-residue protein sequence, read N- to C-terminus: UvrABC system protein C (618 aa).

One can recognise a GIY-YIG domain in the interval 20 to 98 (TAPGVYRMYA…IKSLSPRYNV (79 aa)). In terms of domain architecture, UVR spans 207 to 242 (DQLGEEIMHSMQQASEALEFERAARLRDLLSSLRSM).

The protein belongs to the UvrC family. Interacts with UvrB in an incision complex.

The protein resides in the cytoplasm. In terms of biological role, the UvrABC repair system catalyzes the recognition and processing of DNA lesions. UvrC both incises the 5' and 3' sides of the lesion. The N-terminal half is responsible for the 3' incision and the C-terminal half is responsible for the 5' incision. The protein is UvrABC system protein C of Xanthomonas campestris pv. campestris (strain B100).